Consider the following 429-residue polypeptide: High mobility group nucleosome-binding domain-containing protein 5 (429 aa).

The interval 1–429 (MPKRKAAGDA…GEKGEPVSTV (429 aa)) is disordered. Thr-29 is modified (phosphothreonine). A compositionally biased stretch (basic residues) spans 35–44 (KRASTSRKTK). Lys-64 participates in a covalent cross-link: Glycyl lysine isopeptide (Lys-Gly) (interchain with G-Cter in SUMO2). A Phosphoserine modification is found at Ser-90. Composition is skewed to basic and acidic residues over residues 92–101 (METEEVKEQI) and 109–124 (GGEK…KNDE). Lys-98 participates in a covalent cross-link: Glycyl lysine isopeptide (Lys-Gly) (interchain with G-Cter in SUMO1); alternate. A Glycyl lysine isopeptide (Lys-Gly) (interchain with G-Cter in SUMO2); alternate cross-link involves residue Lys-98. Lys-121 is covalently cross-linked (Glycyl lysine isopeptide (Lys-Gly) (interchain with G-Cter in SUMO2)). Positions 133–152 (EKDEDEKEHEDTGEEGEDGE) are enriched in acidic residues. Residues 153-195 (REGGLKEKPDVAEIEDAKEAKDDEEKEDKEKEDDKGGDGKKEE) are compositionally biased toward basic and acidic residues. Residues 196–209 (EKDDEGEAETEEEV) show a composition bias toward acidic residues. 2 stretches are compositionally biased toward basic and acidic residues: residues 210-387 (KEQQ…NEDR) and 413-429 (NKDF…VSTV).

It belongs to the HMGN family. In terms of tissue distribution, expressed in trophoblast giant cells.

It is found in the nucleus. Its function is as follows. Preferentially binds to euchromatin and modulates cellular transcription by counteracting linker histone-mediated chromatin compaction. The polypeptide is High mobility group nucleosome-binding domain-containing protein 5 (Rattus norvegicus (Rat)).